A 456-amino-acid chain; its full sequence is Acetylcholine receptor subunit alpha (456 aa).

The first 20 residues, 1–20 (MNYFILILPILPYLYGPAVC), serve as a signal peptide directing secretion. Topologically, residues 21–230 (SEDETRLVKT…ITYHFLLLRL (210 aa)) are extracellular. Disulfide bonds link Cys-148-Cys-162 and Cys-212-Cys-213. An N-linked (GlcNAc...) asparagine glycan is attached at Asn-161. Transmembrane regions (helical) follow at residues 231 to 255 (PLYFIVNVIIPCMLFSFLTGLVFYL), 263 to 281 (MTLSISVLLSLTVFLLVIV), and 297 to 316 (YMLFTMIFVIASIIITVIVI). Over 317 to 428 (NTHHRSPSTH…WKFVAMVLDH (112 aa)) the chain is Cytoplasmic. Residues 429–447 (ILLCVFMAVCIIGTLGVFA) form a helical membrane-spanning segment.

The protein belongs to the ligand-gated ion channel (TC 1.A.9) family. Acetylcholine receptor (TC 1.A.9.1) subfamily. Alpha-1/CHRNA1 sub-subfamily. In terms of assembly, one of the alpha chains that assemble within the acetylcholine receptor, a pentamer of two alpha chains, a beta, a delta, and a gamma or epsilon chains.

It localises to the postsynaptic cell membrane. Its subcellular location is the cell membrane. It catalyses the reaction K(+)(in) = K(+)(out). The catalysed reaction is Na(+)(in) = Na(+)(out). Its function is as follows. Upon acetylcholine binding, the AChR responds by an extensive change in conformation that affects all subunits and leads to opening of an ion-conducting channel across the plasma membrane. The chain is Acetylcholine receptor subunit alpha (chrna1) from Danio rerio (Zebrafish).